The chain runs to 1055 residues: Sodium/potassium exporting P-type ATPase 1 (1055 aa).

The Cytoplasmic portion of the chain corresponds to M1–K73. A helical transmembrane segment spans residues I74–A94. Over L95–D99 the chain is Extracellular. Residues W100–Q120 traverse the membrane as a helical segment. The Cytoplasmic segment spans residues E121–K298. The helical transmembrane segment at L299–A319 threads the bilayer. Topologically, residues S320 to N328 are extracellular. Residues V329–L349 form a helical membrane-spanning segment. The Cytoplasmic portion of the chain corresponds to T350 to V789. D385 acts as the 4-aspartylphosphate intermediate in catalysis. 2 residues coordinate Mg(2+): D385 and T387. Residues T387, E491, K544, R586, T646, G647, D648, R705, and K711 each coordinate ATP. Position 730 (D730) interacts with Mg(2+). N733 provides a ligand contact to ATP. The chain crosses the membrane as a helical span at residues L790–I810. Residues D811–S816 lie on the Extracellular side of the membrane. A helical transmembrane segment spans residues V817–A837. Residues M838 to D866 are Cytoplasmic-facing. A helical membrane pass occupies residues M867–Y887. The Extracellular segment spans residues G888–R913. A helical transmembrane segment spans residues S914 to L934. At R935–F962 the chain is on the cytoplasmic side. The chain crosses the membrane as a helical span at residues L963–I983. Over N984–H990 the chain is Extracellular. The helical transmembrane segment at A991–A1011 threads the bilayer. The Cytoplasmic portion of the chain corresponds to E1012 to V1055.

The protein belongs to the cation transport ATPase (P-type) (TC 3.A.3) family. Type IID subfamily. The cofactor is Mg(2+). Post-translationally, the active site is phosphorylated in presence of sodium or potassium and in conditions of higher pH. Not phosphorylated in presence of calcium ions.

It is found in the cell membrane. It catalyses the reaction Na(+)(in) + ATP + H2O = Na(+)(out) + ADP + phosphate + H(+). It carries out the reaction K(+)(in) + ATP + H2O = K(+)(out) + ADP + phosphate + H(+). Its function is as follows. Catalyzes the hydrolysis of ATP coupled with the export of sodium and potassium from the cell. May be an inefficient potassium exporter. May transport other cations such as lithium. Sodium/potassium efflux ATPases are involved in salt tolerance and maintaining the membrane potential across the plasma membrane in high salinity (Na+) or alkaline (K+) environments. This Schwanniomyces occidentalis (Yeast) protein is Sodium/potassium exporting P-type ATPase 1.